The following is a 156-amino-acid chain: Ribosomal RNA large subunit methyltransferase H (156 aa).

S-adenosyl-L-methionine is bound by residues L73, G104, and 123–128 (LSALTL).

The protein belongs to the RNA methyltransferase RlmH family. Homodimer.

Its subcellular location is the cytoplasm. It carries out the reaction pseudouridine(1915) in 23S rRNA + S-adenosyl-L-methionine = N(3)-methylpseudouridine(1915) in 23S rRNA + S-adenosyl-L-homocysteine + H(+). Functionally, specifically methylates the pseudouridine at position 1915 (m3Psi1915) in 23S rRNA. The protein is Ribosomal RNA large subunit methyltransferase H of Shewanella oneidensis (strain ATCC 700550 / JCM 31522 / CIP 106686 / LMG 19005 / NCIMB 14063 / MR-1).